The following is a 247-amino-acid chain: Geranylgeranylglyceryl phosphate synthase (247 aa).

The Mg(2+) site is built by D23 and S52. Sn-glycerol 1-phosphate-binding positions include 171-177 (YLEAGSG), 203-204 (GG), and 225-226 (GT).

The protein belongs to the GGGP/HepGP synthase family. Group II subfamily. It depends on Mg(2+) as a cofactor.

It is found in the cytoplasm. It carries out the reaction sn-glycerol 1-phosphate + (2E,6E,10E)-geranylgeranyl diphosphate = sn-3-O-(geranylgeranyl)glycerol 1-phosphate + diphosphate. Its pathway is membrane lipid metabolism; glycerophospholipid metabolism. Prenyltransferase that catalyzes the transfer of the geranylgeranyl moiety of geranylgeranyl diphosphate (GGPP) to the C3 hydroxyl of sn-glycerol-1-phosphate (G1P). This reaction is the first ether-bond-formation step in the biosynthesis of archaeal membrane lipids. This Methanosarcina barkeri (strain Fusaro / DSM 804) protein is Geranylgeranylglyceryl phosphate synthase.